A 37-amino-acid polypeptide reads, in one-letter code: Large ribosomal subunit protein bL36c (37 aa).

Belongs to the bacterial ribosomal protein bL36 family.

It localises to the plastid. The protein resides in the chloroplast. The polypeptide is Large ribosomal subunit protein bL36c (Phaseolus angularis (Azuki bean)).